Here is an 835-residue protein sequence, read N- to C-terminus: Protein translocase subunit SecA (835 aa).

ATP is bound by residues Q85, 103 to 107 (GEGKT), and D492. Zn(2+) contacts are provided by C819, C821, C830, and C831.

This sequence belongs to the SecA family. Monomer and homodimer. Part of the essential Sec protein translocation apparatus which comprises SecA, SecYEG and auxiliary proteins SecDF. Other proteins may also be involved. It depends on Zn(2+) as a cofactor.

Its subcellular location is the cell membrane. The protein resides in the cytoplasm. It carries out the reaction ATP + H2O + cellular proteinSide 1 = ADP + phosphate + cellular proteinSide 2.. Its function is as follows. Part of the Sec protein translocase complex. Interacts with the SecYEG preprotein conducting channel. Has a central role in coupling the hydrolysis of ATP to the transfer of proteins into and across the cell membrane, serving as an ATP-driven molecular motor driving the stepwise translocation of polypeptide chains across the membrane. The protein is Protein translocase subunit SecA of Clostridium botulinum (strain Okra / Type B1).